Consider the following 376-residue polypeptide: Lipid-A-disaccharide synthase (376 aa).

Belongs to the LpxB family.

It carries out the reaction a lipid X + a UDP-2-N,3-O-bis[(3R)-3-hydroxyacyl]-alpha-D-glucosamine = a lipid A disaccharide + UDP + H(+). Its pathway is bacterial outer membrane biogenesis; LPS lipid A biosynthesis. Its function is as follows. Condensation of UDP-2,3-diacylglucosamine and 2,3-diacylglucosamine-1-phosphate to form lipid A disaccharide, a precursor of lipid A, a phosphorylated glycolipid that anchors the lipopolysaccharide to the outer membrane of the cell. The chain is Lipid-A-disaccharide synthase from Pseudomonas fluorescens (strain Pf0-1).